The primary structure comprises 361 residues: tRNA-specific 2-thiouridylase MnmA (361 aa).

Residues 10-17 and Met-36 contribute to the ATP site; that span reads GMSGGVDS. Cys-104 functions as the Nucleophile in the catalytic mechanism. Cysteines 104 and 202 form a disulfide. Gly-128 serves as a coordination point for ATP. Positions 152–154 are interaction with tRNA; it reads KDQ. The active-site Cysteine persulfide intermediate is the Cys-202. The interval 308-309 is interaction with tRNA; the sequence is RY.

It belongs to the MnmA/TRMU family.

It is found in the cytoplasm. It catalyses the reaction S-sulfanyl-L-cysteinyl-[protein] + uridine(34) in tRNA + AH2 + ATP = 2-thiouridine(34) in tRNA + L-cysteinyl-[protein] + A + AMP + diphosphate + H(+). Catalyzes the 2-thiolation of uridine at the wobble position (U34) of tRNA, leading to the formation of s(2)U34. The protein is tRNA-specific 2-thiouridylase MnmA of Clostridioides difficile (strain 630) (Peptoclostridium difficile).